The sequence spans 102 residues: Small ribosomal subunit protein uS10 (102 aa).

Belongs to the universal ribosomal protein uS10 family. Part of the 30S ribosomal subunit.

Involved in the binding of tRNA to the ribosomes. In Cupriavidus metallidurans (strain ATCC 43123 / DSM 2839 / NBRC 102507 / CH34) (Ralstonia metallidurans), this protein is Small ribosomal subunit protein uS10.